Reading from the N-terminus, the 270-residue chain is 3-phenylpropionate-dihydrodiol/cinnamic acid-dihydrodiol dehydrogenase (270 aa).

Phenylalanine 10 to alanine 34 provides a ligand contact to NAD(+). Serine 143 is a binding site for substrate. The Proton acceptor role is filled by tyrosine 156.

Belongs to the short-chain dehydrogenases/reductases (SDR) family.

The catalysed reaction is 3-(cis-5,6-dihydroxycyclohexa-1,3-dien-1-yl)propanoate + NAD(+) = 3-(2,3-dihydroxyphenyl)propanoate + NADH + H(+). It carries out the reaction (2E)-3-(cis-5,6-dihydroxycyclohexa-1,3-dien-1-yl)prop-2-enoate + NAD(+) = (2E)-3-(2,3-dihydroxyphenyl)prop-2-enoate + NADH + H(+). Its pathway is aromatic compound metabolism; 3-phenylpropanoate degradation. Its function is as follows. Converts 3-phenylpropionate-dihydrodiol (PP-dihydrodiol) and cinnamic acid-dihydrodiol (CI-dihydrodiol) into 3-(2,3-dihydroxylphenyl)propanoic acid (DHPP) and 2,3-dihydroxicinnamic acid (DHCI), respectively. The sequence is that of 3-phenylpropionate-dihydrodiol/cinnamic acid-dihydrodiol dehydrogenase from Shigella sonnei (strain Ss046).